Here is a 348-residue protein sequence, read N- to C-terminus: Photosystem II protein D1 (348 aa).

3 helical membrane-spanning segments follow: residues 33 to 50 (YIGW…LATV), 122 to 137 (HFIF…EWEF), and 146 to 160 (WIFV…ASCA). His-122 contacts chlorophyll a. Trp-130 is a binding site for pheophytin a. Residues Asp-174 and Glu-193 each coordinate [CaMn4O5] cluster. The chain crosses the membrane as a helical span at residues 201–222 (FHILGVAGVFGGSLFSAMHGSL). Residue His-202 participates in chlorophyll a binding. A quinone contacts are provided by residues His-219 and 268–269 (SF). Position 219 (His-219) interacts with Fe cation. His-276 provides a ligand contact to Fe cation. A helical membrane pass occupies residues 278–292 (FLAAWPVIGIWFTAL). The [CaMn4O5] cluster site is built by His-336, Glu-337, Asp-346, and Ala-348.

This sequence belongs to the reaction center PufL/M/PsbA/D family. In terms of assembly, PSII is composed of 1 copy each of membrane proteins PsbA, PsbB, PsbC, PsbD, PsbE, PsbF, PsbH, PsbI, PsbJ, PsbK, PsbL, PsbM, PsbT, PsbX, PsbY, PsbZ, Psb30/Ycf12, at least 3 peripheral proteins of the oxygen-evolving complex and a large number of cofactors. It forms dimeric complexes. The D1/D2 heterodimer binds P680, chlorophylls that are the primary electron donor of PSII, and subsequent electron acceptors. It shares a non-heme iron and each subunit binds pheophytin, quinone, additional chlorophylls, carotenoids and lipids. D1 provides most of the ligands for the Mn4-Ca-O5 cluster of the oxygen-evolving complex (OEC). There is also a Cl(-1) ion associated with D1 and D2, which is required for oxygen evolution. The PSII complex binds additional chlorophylls, carotenoids and specific lipids. is required as a cofactor. In terms of processing, tyr-165 forms a radical intermediate that is referred to as redox-active TyrZ, YZ or Y-Z.

It is found in the plastid. The protein localises to the chloroplast thylakoid membrane. The enzyme catalyses 2 a plastoquinone + 4 hnu + 2 H2O = 2 a plastoquinol + O2. Functionally, photosystem II (PSII) is a light-driven water:plastoquinone oxidoreductase that uses light energy to abstract electrons from H(2)O, generating O(2) and a proton gradient subsequently used for ATP formation. It consists of a core antenna complex that captures photons, and an electron transfer chain that converts photonic excitation into a charge separation. The D1/D2 (PsbA/PsbD) reaction center heterodimer binds P680, the primary electron donor of PSII as well as several subsequent electron acceptors. This chain is Photosystem II protein D1, found in Heterocapsa rotundata (Dinoflagellate).